Consider the following 197-residue polypeptide: MIIEIEGIKLKLHPEVYEPAEDSILLLKNLVDVKNKDVLEIGVGTGLISIACAKKGAKKIVGVDINPYAVKLAKENAKLNNVNISFFESDLFENVTGKFDVILFNPPYLPTSEDEKIDSYLNFAFDGGKDGREILDRFIYELPNYLKKGGVVQILQSSLTGEKETINKLKPLGFKVEISARLKVPFEELMVINAWRL.

S-adenosyl-L-methionine is bound by residues 42-46 (GVGTG), Asp-64, and Asn-105. Residue 105-108 (NPPY) coordinates substrate.

Belongs to the eukaryotic/archaeal PrmC-related family.

The enzyme catalyses L-glutaminyl-[protein] + S-adenosyl-L-methionine = N(5)-methyl-L-glutaminyl-[protein] + S-adenosyl-L-homocysteine + H(+). Putative protein methyltransferase using S-adenosyl-L-methionine as the methyl donor. May methylate a Gln residue in target proteins. The sequence is that of Putative protein N5-glutamine methyltransferase MJ0928 from Methanocaldococcus jannaschii (strain ATCC 43067 / DSM 2661 / JAL-1 / JCM 10045 / NBRC 100440) (Methanococcus jannaschii).